We begin with the raw amino-acid sequence, 856 residues long: Envelope glycoprotein gp150 (856 aa).

Over 1 to 785 (MAEGFAANRQ…WIGNIPQYLK (785 aa)) the chain is Extracellular. Asn220, Asn258, Asn269, Asn274, Asn298, Asn330, Asn336, Asn342, Asn418, Asn422, Asn448, Asn481, Asn499, Asn518, Asn531, Asn548, and Asn551 each carry an N-linked (GlcNAc...) asparagine; by host glycan. The segment at 616 to 636 (VMLALATVLSIAGAGTGATAI) is fusion peptide. The stretch at 643–693 (HQVLATHQEAIEKVTGALKINNLRLVTLEHQVLVIGLKVEAMEKFLYTAFA) forms a coiled coil. An immunosuppression region spans residues 662–680 (INNLRLVTLEHQVLVIGLK). N-linked (GlcNAc...) asparagine; by host glycosylation is found at Asn717, Asn721, Asn729, and Asn737. A coiled-coil region spans residues 736-772 (YNQTKDLQQKFYEIIMDIEQNNVQGKTGIQQLQKWED). The helical transmembrane segment at 786–806 (GLLGGILGIGLGVLLLILCLP) threads the bilayer. Topologically, residues 807–856 (TLVDCIRNCIHKILGYTVIAMPEVEGEEIQPQMELRRNGRQCGMSEKEEE) are cytoplasmic.

The mature envelope protein (Env) consists of a trimer of SU-TM heterodimers attached by noncovalent interactions or by a labile interchain disulfide bond. Specific enzymatic cleavages in vivo yield mature proteins. Envelope glycoproteins are synthesized as an inactive precursor that is N-glycosylated and processed likely by host cell furin or by a furin-like protease in the Golgi to yield the mature SU and TM proteins. The cleavage site between SU and TM requires the minimal sequence [KR]-X-[KR]-R.

The protein localises to the virion membrane. It localises to the host cell membrane. Functionally, the surface protein (SU) attaches the virus to the host cell by binding to its receptor. This interaction triggers the refolding of the transmembrane protein (TM) and is thought to activate its fusogenic potential by unmasking its fusion peptide. Fusion occurs at the host cell plasma membrane. In terms of biological role, the transmembrane protein (TM) acts as a class I viral fusion protein. Under the current model, the protein has at least 3 conformational states: pre-fusion native state, pre-hairpin intermediate state, and post-fusion hairpin state. During viral and target cell membrane fusion, the coiled coil regions (heptad repeats) assume a trimer-of-hairpins structure, positioning the fusion peptide in close proximity to the C-terminal region of the ectodomain. The formation of this structure appears to drive apposition and subsequent fusion of viral and target cell membranes. Membranes fusion leads to delivery of the nucleocapsid into the cytoplasm. The polypeptide is Envelope glycoprotein gp150 (env) (Felidae (cat family)).